The primary structure comprises 257 residues: Snake venom serine protease KN11 (257 aa).

The signal sequence occupies residues methionine 1–alanine 18. Residues glutamine 19 to leucine 24 constitute a propeptide that is removed on maturation. Residues valine 25–alanine 248 form the Peptidase S1 domain. 6 disulfide bridges follow: cysteine 31-cysteine 162, cysteine 49-cysteine 65, cysteine 97-cysteine 255, cysteine 141-cysteine 209, cysteine 173-cysteine 188, and cysteine 199-cysteine 224. Residues histidine 64 and aspartate 109 each act as charge relay system in the active site. 2 N-linked (GlcNAc...) asparagine glycosylation sites follow: asparagine 120 and asparagine 121. Catalysis depends on serine 203, which acts as the Charge relay system.

Belongs to the peptidase S1 family. Snake venom subfamily. Monomer. In terms of tissue distribution, expressed by the venom gland.

The protein resides in the secreted. Functionally, snake venom serine protease that may act in the hemostasis system of the prey. The chain is Snake venom serine protease KN11 from Trimeresurus stejnegeri (Chinese green tree viper).